Here is a 67-residue protein sequence, read N- to C-terminus: Phycobilisome 7.8 kDa linker polypeptide, allophycocyanin-associated, core (67 aa).

In terms of domain architecture, CpcD-like spans 1–56 (MRMFRITACLPSPSKIRTQRELQNTFFTKLVPYDAWFREQQRIQKLGGKIIKVELA).

It belongs to the phycobilisome linker protein family.

The protein localises to the cellular thylakoid membrane. Its function is as follows. Rod linker protein, associated with allophycocyanin. Linker polypeptides determine the state of aggregation and the location of the disk-shaped phycobiliprotein units within the phycobilisome and modulate their spectroscopic properties in order to mediate a directed and optimal energy transfer. The protein is Phycobilisome 7.8 kDa linker polypeptide, allophycocyanin-associated, core (apcC) of Synechococcus sp. (strain ATCC 27144 / PCC 6301 / SAUG 1402/1) (Anacystis nidulans).